A 558-amino-acid chain; its full sequence is Tektin-5 (558 aa).

Positions 347 to 381 form a coiled coil; it reads ISEETDVKNKLQTQLAKILQEIFQAENTIMLLERA.

Belongs to the tektin family. As to quaternary structure, microtubule inner protein component of sperm flagellar doublet microtubules. Interacts with TEKT3. Ubiquitinated, leading to its degradation. Deubiquitinated by USP16, promoting its stability. In terms of tissue distribution, specifically expressed in testis.

The protein resides in the cytoplasm. Its subcellular location is the cytoskeleton. It is found in the flagellum axoneme. In terms of biological role, sperm-specific microtubule inner protein (MIP) part of the dynein-decorated doublet microtubules (DMTs) in flagellar axoneme. Forms an extensive interaction network in different conformations that reinforces the helix bundle composed by other tektin proteins (TEKT1 to TEKT4) and MIPs to anchor the tektin bundle onto the tubulin wall of A-tubule of the sperm flagellum. This is Tektin-5 from Rattus norvegicus (Rat).